A 427-amino-acid chain; its full sequence is Histidinol dehydrogenase (427 aa).

NAD(+) contacts are provided by Tyr125, Gln186, and Asn209. Substrate is bound by residues Ser234, Gln256, and His259. Residues Gln256 and His259 each contribute to the Zn(2+) site. Active-site proton acceptor residues include Glu325 and His326. Substrate contacts are provided by His326, Asp359, Glu413, and His419. Asp359 serves as a coordination point for Zn(2+). A Zn(2+)-binding site is contributed by His419.

Belongs to the histidinol dehydrogenase family. Zn(2+) is required as a cofactor.

The catalysed reaction is L-histidinol + 2 NAD(+) + H2O = L-histidine + 2 NADH + 3 H(+). The protein operates within amino-acid biosynthesis; L-histidine biosynthesis; L-histidine from 5-phospho-alpha-D-ribose 1-diphosphate: step 9/9. Functionally, catalyzes the sequential NAD-dependent oxidations of L-histidinol to L-histidinaldehyde and then to L-histidine. The polypeptide is Histidinol dehydrogenase (Leptospira interrogans serogroup Icterohaemorrhagiae serovar copenhageni (strain Fiocruz L1-130)).